Consider the following 251-residue polypeptide: Imidazole glycerol phosphate synthase subunit HisF (251 aa).

Active-site residues include Asp11 and Asp130.

Belongs to the HisA/HisF family. In terms of assembly, heterodimer of HisH and HisF.

The protein resides in the cytoplasm. It carries out the reaction 5-[(5-phospho-1-deoxy-D-ribulos-1-ylimino)methylamino]-1-(5-phospho-beta-D-ribosyl)imidazole-4-carboxamide + L-glutamine = D-erythro-1-(imidazol-4-yl)glycerol 3-phosphate + 5-amino-1-(5-phospho-beta-D-ribosyl)imidazole-4-carboxamide + L-glutamate + H(+). It functions in the pathway amino-acid biosynthesis; L-histidine biosynthesis; L-histidine from 5-phospho-alpha-D-ribose 1-diphosphate: step 5/9. Its function is as follows. IGPS catalyzes the conversion of PRFAR and glutamine to IGP, AICAR and glutamate. The HisF subunit catalyzes the cyclization activity that produces IGP and AICAR from PRFAR using the ammonia provided by the HisH subunit. The polypeptide is Imidazole glycerol phosphate synthase subunit HisF (Parabacteroides distasonis (strain ATCC 8503 / DSM 20701 / CIP 104284 / JCM 5825 / NCTC 11152)).